Here is a 299-residue protein sequence, read N- to C-terminus: ATP phosphoribosyltransferase (299 aa).

Belongs to the ATP phosphoribosyltransferase family. Long subfamily. The cofactor is Mg(2+).

Its subcellular location is the cytoplasm. The enzyme catalyses 1-(5-phospho-beta-D-ribosyl)-ATP + diphosphate = 5-phospho-alpha-D-ribose 1-diphosphate + ATP. It functions in the pathway amino-acid biosynthesis; L-histidine biosynthesis; L-histidine from 5-phospho-alpha-D-ribose 1-diphosphate: step 1/9. Its activity is regulated as follows. Feedback inhibited by histidine. In terms of biological role, catalyzes the condensation of ATP and 5-phosphoribose 1-diphosphate to form N'-(5'-phosphoribosyl)-ATP (PR-ATP). Has a crucial role in the pathway because the rate of histidine biosynthesis seems to be controlled primarily by regulation of HisG enzymatic activity. This Shewanella halifaxensis (strain HAW-EB4) protein is ATP phosphoribosyltransferase.